Reading from the N-terminus, the 158-residue chain is Cyclic pyranopterin monophosphate synthase (158 aa).

Substrate is bound by residues 75–77 and 113–114; these read LCH and ME. Asp-128 is an active-site residue.

This sequence belongs to the MoaC family. As to quaternary structure, homohexamer; trimer of dimers.

The enzyme catalyses (8S)-3',8-cyclo-7,8-dihydroguanosine 5'-triphosphate = cyclic pyranopterin phosphate + diphosphate. It participates in cofactor biosynthesis; molybdopterin biosynthesis. Its function is as follows. Catalyzes the conversion of (8S)-3',8-cyclo-7,8-dihydroguanosine 5'-triphosphate to cyclic pyranopterin monophosphate (cPMP). This is Cyclic pyranopterin monophosphate synthase from Azorhizobium caulinodans (strain ATCC 43989 / DSM 5975 / JCM 20966 / LMG 6465 / NBRC 14845 / NCIMB 13405 / ORS 571).